The primary structure comprises 657 residues: Pyoverdine export ATP-binding/permease protein PvdT (657 aa).

One can recognise an ABC transporter domain in the interval isoleucine 6–alanine 245. Residue glycine 43–serine 50 coordinates ATP. 4 helical membrane-spanning segments follow: residues alanine 285–glycine 305, isoleucine 539–valine 559, leucine 590–isoleucine 610, and leucine 620–methionine 640.

It belongs to the ABC transporter superfamily. Macrolide exporter (TC 3.A.1.122) family. As to quaternary structure, part of the tripartite efflux system PvdRT-OpmQ, which is composed of an inner membrane component with both ATPase and permease domains, PvdT, a periplasmic membrane fusion protein, PvdR, and an outer membrane component, OpmQ.

Its subcellular location is the cell inner membrane. Part of the tripartite efflux system PvdRT-OpmQ required for the secretion into the extracellular milieu of the siderophore pyoverdine (PVD), which is involved in iron acquisition. This subunit binds PVD and drives its secretion by hydrolyzing ATP. The system is responsible for export of newly synthesized PVD after the final steps of biosynthesis have taken place in the periplasm. It is also responsible for recycling of PVD after internalization of ferri-PVD into the periplasm by the outer-membrane receptor FpvA and release of iron from PVD, thus making PVD available for new cycles of iron uptake. The chain is Pyoverdine export ATP-binding/permease protein PvdT from Pseudomonas fluorescens (strain Pf0-1).